The primary structure comprises 268 residues: Protein CONTINUOUS VASCULAR RING 1 (268 aa).

Residues 1–70 (MGDEKPVIVM…GWASKKFMTG (70 aa)) are Cytoplasmic-facing. The tract at residues 21 to 48 (IPVADSGDKDDGSSSKPSSSSSASSSSH) is disordered. The span at 34 to 48 (SSKPSSSSSASSSSH) shows a compositional bias: low complexity. A helical transmembrane segment spans residues 71–91 (CVILLPIAITFYITWWFIHFV). Over 92–103 (DGFFSPIYAQLG) the chain is Extracellular. Residues 104–124 (INVFGFGFLTSIAFIFLVGVF) traverse the membrane as a helical segment. The Cytoplasmic segment spans residues 125–268 (MSSWLGASVL…LASIDRATSL (144 aa)).

It belongs to the plant COV1 protein family. Mostly expressed in flowers and stems, and, to a lower extent, in roots and leaves.

The protein resides in the membrane. Its function is as follows. Involved in the regulation of vascular patterning in the stem, probably by negatively regulating the differentiation of vascular tissue. The protein is Protein CONTINUOUS VASCULAR RING 1 of Arabidopsis thaliana (Mouse-ear cress).